Here is a 204-residue protein sequence, read N- to C-terminus: MPIGVPKVPFRLPGEEDAVWIDVYNRLYRERLLFLGQHVDDEIANQLIGIMMYLNGEDESKDMYLYINSPGGAVLAGISVYDTMQFVVPDVHTICMGLAASMGSFILTGGEITKRIALPHARIMIHQPASSYYDGQAGECIMEAEEVLKLRDCITKVYVQRTGKPLWVISEDMERDVFMSAKEAQIYGIVDFVAIETTSNSLTN.

Ser101 acts as the Nucleophile in catalysis. Residue His126 is part of the active site.

Belongs to the peptidase S14 family. As to quaternary structure, component of the chloroplastic Clp protease core complex.

Its subcellular location is the plastid. The protein resides in the chloroplast stroma. The catalysed reaction is Hydrolysis of proteins to small peptides in the presence of ATP and magnesium. alpha-casein is the usual test substrate. In the absence of ATP, only oligopeptides shorter than five residues are hydrolyzed (such as succinyl-Leu-Tyr-|-NHMec, and Leu-Tyr-Leu-|-Tyr-Trp, in which cleavage of the -Tyr-|-Leu- and -Tyr-|-Trp bonds also occurs).. In terms of biological role, cleaves peptides in various proteins in a process that requires ATP hydrolysis. Has a chymotrypsin-like activity. Plays a major role in the degradation of misfolded proteins. In Anthoceros angustus (Hornwort), this protein is ATP-dependent Clp protease proteolytic subunit.